The following is a 531-amino-acid chain: Berberine bridge enzyme-like 9 (531 aa).

The N-terminal stretch at 1-23 is a signal peptide; the sequence is MTSLTTQTLIITIFLLTIPTSFA. Cysteines 35 and 99 form a disulfide. Residues asparagine 76, asparagine 164, asparagine 271, asparagine 300, asparagine 314, asparagine 400, and asparagine 485 are each glycosylated (N-linked (GlcNAc...) asparagine). An FAD-binding PCMH-type domain is found at 77-252; sequence MTRKPVAIVA…LAWKIKLVPV (176 aa). Residues 114–177 constitute a cross-link (6-(S-cysteinyl)-8alpha-(pros-histidyl)-FAD (His-Cys)); it reads HDYDGMSYLS…DLRGFPAGIC (64 aa).

It belongs to the oxygen-dependent FAD-linked oxidoreductase family. It depends on FAD as a cofactor. In terms of processing, the FAD cofactor is bound via a bicovalent 6-S-cysteinyl, 8alpha-N1-histidyl FAD linkage. Accumulates in cell walls of etiolated hypocotyls.

The protein localises to the secreted. The protein resides in the cell wall. In Arabidopsis thaliana (Mouse-ear cress), this protein is Berberine bridge enzyme-like 9.